Reading from the N-terminus, the 779-residue chain is Angiomotin-like protein 2 (779 aa).

2 disordered regions span residues 41–215 (GGAG…QYPH) and 263–308 (QYLQ…TSGS). 2 stretches are compositionally biased toward basic and acidic residues: residues 100-112 (KGEE…EAKA) and 141-152 (RRQDEALRELRH). The interval 101-307 (GEELPTYEEA…SAQASSATSG (207 aa)) is required for interaction with CDH5. Tyr107 carries the phosphotyrosine; by FGFR1 modification. The segment covering 160–169 (ERLLQLSLER) has biased composition (low complexity). Polar residues predominate over residues 177–193 (HMSSSHSFPQLARNQQG). A compositionally biased stretch (pro residues) spans 196–213 (LRGPPAEGPESRGPPPQY). Residues 220–307 (HETTTAVTDP…SAQASSATSG (88 aa)) are required for interaction with CDH1. The span at 298 to 308 (SAQASSATSGS) shows a compositional bias: low complexity. A coiled-coil region spans residues 308-581 (SAHLAQMEAV…KYLEERAMRQ (274 aa)). Glycyl lysine isopeptide (Lys-Gly) (interchain with G-Cter in ubiquitin) cross-links involve residues Lys347 and Lys408. Disordered regions lie at residues 522–543 (RAQQ…SPEL) and 679–753 (TQGW…GCSS). Gly residues predominate over residues 530–539 (APGGSSGSGG). 2 stretches are compositionally biased toward polar residues: residues 680–690 (QGWQGLSSSER) and 725–740 (DGST…TSTC). A phosphoserine mark is found at Ser759 and Ser762. The PDZ-binding signature appears at 776–779 (EILI).

It belongs to the angiomotin family. In terms of assembly, part of a complex composed of AMOTL2, MAGI1 and CDH5, within the complex AMOTL2 acts as a scaffold protein for the interaction of MAGI1 with CDH5. The complex is required for coupling actin fibers to cell junctions in endothelial cells. Within the complex AMOTL2 (via its N-terminus) interacts with CDH5. Interacts (via N-terminus) with MAGI1. Interacts (via N-terminus) with ACTB; the interaction facilitates binding of cell junction complexes to actin fibers in endothelial cells. Interacts with CDH1; the interaction may facilitate binding of radial actin fibers to cell junction complexes. Interacts with SRC. Interacts with YAP1; the interaction is required for ubiquitination of AMOTL2 and localization of YAP1 to tight junctions. Interacts with WWP1; the interaction facilitates WWP1 interaction with the Crumbs complex and subsequent WWP1 translocation to the plasma membrane. WWP1 interaction with the Crumbs complex promotes WWP1 monoubiquitination of AMOTL2 which subsequently activates the Hippo signaling pathway. When ubiquitinated interacts with LATS2 (via UBA domain); the interaction promotes LATS2 phosphorylation of YAP1. Interacts (via PPXY motif) with WWTR1/TAZ (via WW domain); the interaction promotes WWTR1/TAZ localization to the cytoplasm and thereby inhibition of its transcriptional properties. Interacts with PHLDB2; interaction may facilitate PHLDB2 localization to the myotube podosome cortex that surrounds the core. In terms of processing, monoubiquitinated at Lys-347 and Lys-408 by Crumbs complex-bound WWP1. De-ubiquitinated at Lys-347 and Lys-408 by USP9X; the interaction may be promoted by cell contact inhibition. Deubiquitination of AMOTL2 negatively regulates Hippo signaling activation. Post-translationally, phosphorylation at Tyr-107 is necessary for efficient binding to SRC and synergistically functioning with SRC to activate the downstream MAPK pathway.

The protein localises to the recycling endosome. It is found in the cytoplasm. It localises to the cell projection. Its subcellular location is the podosome. The protein resides in the cell junction. In terms of biological role, regulates the translocation of phosphorylated SRC to peripheral cell-matrix adhesion sites. Required for proper architecture of actin filaments. Plays a role in coupling actin fibers to cell junctions in endothelial cells and is therefore required for correct endothelial cell morphology via facilitating transcellular transmission of mechanical force resulting in endothelial cell elongation. Required for the anchoring of radial actin fibers to CDH1 junction complexes at the cell membrane which facilitates organization of radial actin fiber structure and cellular response to contractile forces. This contributes to maintenance of cell area, size, shape, epithelial sheet organization and trophectoderm cell properties that facilitate blastocyst zona hatching. Inhibits the Wnt/beta-catenin signaling pathway, probably by recruiting CTNNB1 to recycling endosomes and hence preventing its translocation to the nucleus. Participates in angiogenesis. Activates the Hippo signaling pathway in response to cell contact inhibition via interaction with and ubiquitination by Crumbs complex-bound WWP1. Ubiquitinated AMOTL2 then interacts with LATS2 which in turn phosphorylates YAP1, excluding it from the nucleus and localizing it to the cytoplasm and tight junctions, therefore ultimately repressing YAP1-driven transcription of target genes. Acts to inhibit WWTR1/TAZ transcriptional coactivator activity via sequestering WWTR1/TAZ in the cytoplasm and at tight junctions. Regulates the size and protein composition of the podosome cortex and core at myofibril neuromuscular junctions. Selectively promotes FGF-induced MAPK activation through SRC. May play a role in the polarity, proliferation and migration of endothelial cells. This is Angiomotin-like protein 2 from Homo sapiens (Human).